We begin with the raw amino-acid sequence, 165 residues long: Neurotrophin-3 (165 aa).

The signal sequence occupies residues 1-3 (IQS). The propeptide occupies 4–119 (TSMDQGSLSE…VLTXTSXXXR (116 aa)).

This sequence belongs to the NGF-beta family.

Its subcellular location is the secreted. In terms of biological role, seems to promote the survival of visceral and proprioceptive sensory neurons. The chain is Neurotrophin-3 (NTF3) from Tropidophis haetianus (Haitian dwarf boa).